A 365-amino-acid chain; its full sequence is tRNA N6-adenosine threonylcarbamoyltransferase (365 aa).

Fe cation is bound by residues histidine 119 and histidine 123. Substrate contacts are provided by residues 141–145 (LVSGG), aspartate 174, glycine 187, and asparagine 289. Aspartate 317 lines the Fe cation pocket. The disordered stretch occupies residues 341–365 (SARPRWPLDKTSPALIGSGKKGAKA).

This sequence belongs to the KAE1 / TsaD family. Fe(2+) is required as a cofactor.

It localises to the cytoplasm. The catalysed reaction is L-threonylcarbamoyladenylate + adenosine(37) in tRNA = N(6)-L-threonylcarbamoyladenosine(37) in tRNA + AMP + H(+). Required for the formation of a threonylcarbamoyl group on adenosine at position 37 (t(6)A37) in tRNAs that read codons beginning with adenine. Is involved in the transfer of the threonylcarbamoyl moiety of threonylcarbamoyl-AMP (TC-AMP) to the N6 group of A37, together with TsaE and TsaB. TsaD likely plays a direct catalytic role in this reaction. The sequence is that of tRNA N6-adenosine threonylcarbamoyltransferase from Ruegeria sp. (strain TM1040) (Silicibacter sp.).